A 632-amino-acid polypeptide reads, in one-letter code: RNA-binding post-transcriptional regulator csx1 (632 aa).

S42 and S54 each carry phosphoserine; by MAPK sty1. Phosphoserine is present on residues S67 and S69. 2 consecutive RRM domains span residues 85–167 and 182–261; these read DTLW…WATG and FSIF…VASP. Position 291 is a phosphoserine; by MAPK sty1 (S291). The 73-residue stretch at 297 to 369 folds into the RRM 3 domain; it reads TTVFVGGLAS…SHIRLAWGHN (73 aa). At S455 the chain carries Phosphoserine; by MAPK sty1. The tract at residues 456–476 is disordered; sequence PPPLSRSASISPTLSGSGSGL. Residues 466 to 476 are compositionally biased toward low complexity; the sequence is SPTLSGSGSGL.

Interacts with cip1 and cip2.

Its subcellular location is the cytoplasm. Its function is as follows. Regulates global gene expression after oxidative stress. Interacts and stabilizes atf1 and pcr1 mRNAs after oxidative stress, thus controlling their turnover. In Schizosaccharomyces pombe (strain 972 / ATCC 24843) (Fission yeast), this protein is RNA-binding post-transcriptional regulator csx1 (csx1).